Consider the following 350-residue polypeptide: Uroporphyrinogen decarboxylase (350 aa).

Substrate is bound by residues 28–32 (RQAGR), phenylalanine 47, aspartate 78, tyrosine 155, serine 210, and histidine 325.

It belongs to the uroporphyrinogen decarboxylase family. Homodimer.

It localises to the cytoplasm. It catalyses the reaction uroporphyrinogen III + 4 H(+) = coproporphyrinogen III + 4 CO2. It participates in porphyrin-containing compound metabolism; protoporphyrin-IX biosynthesis; coproporphyrinogen-III from 5-aminolevulinate: step 4/4. Its function is as follows. Catalyzes the decarboxylation of four acetate groups of uroporphyrinogen-III to yield coproporphyrinogen-III. In Synechocystis sp. (strain ATCC 27184 / PCC 6803 / Kazusa), this protein is Uroporphyrinogen decarboxylase.